A 1398-amino-acid polypeptide reads, in one-letter code: DNA-directed RNA polymerase subunit beta' (1398 aa).

Residues Cys-70, Cys-72, Cys-85, and Cys-88 each contribute to the Zn(2+) site. Mg(2+)-binding residues include Asp-460, Asp-462, and Asp-464. Zn(2+) is bound by residues Cys-814, Cys-888, Cys-895, and Cys-898.

Belongs to the RNA polymerase beta' chain family. As to quaternary structure, the RNAP catalytic core consists of 2 alpha, 1 beta, 1 beta' and 1 omega subunit. When a sigma factor is associated with the core the holoenzyme is formed, which can initiate transcription. It depends on Mg(2+) as a cofactor. Requires Zn(2+) as cofactor.

The catalysed reaction is RNA(n) + a ribonucleoside 5'-triphosphate = RNA(n+1) + diphosphate. In terms of biological role, DNA-dependent RNA polymerase catalyzes the transcription of DNA into RNA using the four ribonucleoside triphosphates as substrates. The protein is DNA-directed RNA polymerase subunit beta' of Pseudomonas putida (Arthrobacter siderocapsulatus).